The chain runs to 796 residues: MIGINKMIIQRTELYTTTGVVKSTIHGNIINISFNRNIQYQYRQISNKNKNRNLSPRVLNLKEKGTARVTKLNKNRKKGMRVVQKKDILNAKLNVQTPIVVEEIKNISFASQMVHKEHDNLPTLRSKQRMLLKAYFDQLRINNLKAVNNIFTLKKRVLNLKSNYLIVTYSPKGTKVNKANVLQQLLKYKQYFTKKWAFKLKARVTKTNFIKTQIALEKQKVRNIAQPCYISLNQKINKKLQKLQKQKLVLTSKAKLQRFKKQRYLFLKSQSKLDIDLLLIELKKKARQSKIKYKRRTKKKVKSVKVIEELKDFVALEEEMEAYYKTPVETIMSSIVTKYTENAKPLILKNLQQKLRVKEYLQYSQIRRLIDITNEKELYKNKELSKRNEKKLKKSIQQKFLKTVVIAVNHKKNQQKDSKKELIIKVLLNILRRKGEVPFEGKIDMVLPYLKELGRKQDDAKMNNLALNLQMRIVTDLLNYKGDTEVKNNHVALVRKRIDYLNYMSQNPRRSRNAGPRSDYKVIGKAKYQGKMMYAKLTEQRKMLENVALKNNYNILNNIIESEKKLYKLRLPKQRVTVPTLYQIYERVINHIKGFERKTQGVYSKAKKFQNILTKLQAIKRNKKGTIKKRRLKKAQEETTAPVTIPLTQGVLRITLKKKNMFLVLQNLSTKHIDTTVTARQEYYRIYNPKEIDPLEKKKKQALKLTALKPLGPIGRVIGTDLFRRRVITQVLLNLKAQIKYNVLDIEIRKPGFHSIINTILYKLWYIYEDQGLLRMYKFTKNKAHGSMRKKKHRRL.

The protein resides in the mitochondrion. This is an uncharacterized protein from Dictyostelium discoideum (Social amoeba).